The following is a 192-amino-acid chain: uncharacterized protein (192 aa).

Positions histidine 29 to serine 160 constitute a Nudix hydrolase domain. The Nudix box motif lies at glycine 67–alanine 89. Glutamate 83 and glutamate 87 together coordinate Mg(2+).

It belongs to the Nudix hydrolase family. PCD1 subfamily. Mn(2+) serves as cofactor. The cofactor is Mg(2+).

Functionally, probably mediates the hydrolysis of some nucleoside diphosphate derivatives. This is an uncharacterized protein from Escherichia fergusonii (strain ATCC 35469 / DSM 13698 / CCUG 18766 / IAM 14443 / JCM 21226 / LMG 7866 / NBRC 102419 / NCTC 12128 / CDC 0568-73).